The primary structure comprises 392 residues: [Phe13]-bombesin receptor (392 aa).

The Extracellular portion of the chain corresponds to 1-40; it reads MPEGFQSLNQTLPSAISSIAHLESLNDSFILGAKQSEDVS. N-linked (GlcNAc...) asparagine glycosylation is found at Asn-9 and Asn-26. Residues 41 to 62 traverse the membrane as a helical segment; that stretch reads PGLEILALISVTYAVIISVGIL. Over 63-81 the chain is Cytoplasmic; sequence GNTILIKVFFKIKSMQTVP. The chain crosses the membrane as a helical span at residues 82-102; the sequence is NIFITSLAFGDLLLLLTCVPV. The Extracellular segment spans residues 103 to 120; it reads DASRYIVDTWMFGRAGCK. An intrachain disulfide couples Cys-119 to Cys-202. The chain crosses the membrane as a helical span at residues 121–142; it reads IISFIQLTSVGVSVFTLTVLSA. Over 143–162 the chain is Cytoplasmic; it reads DRYRAIVKPLQLQTSDAVLK. Residues 163–183 traverse the membrane as a helical segment; the sequence is TCGKAVCVWIISMLLAAPEAV. Residues 184 to 219 are Extracellular-facing; the sequence is FSDLYEFGSSEKNTTFEACAPYPVSEKILQETHSLI. Residues 220–240 traverse the membrane as a helical segment; that stretch reads CFLVFYIVPLSIISAYYFLIA. Over 241–271 the chain is Cytoplasmic; the sequence is KTLYKSTFNMPAEEHTHARKQIESRKRVAKT. The chain crosses the membrane as a helical span at residues 272-292; the sequence is VLVLVALFAVCWLPNHMLYLY. At 293-312 the chain is on the extracellular side; sequence RSFTYHSAVNSSAFHLSATI. A helical membrane pass occupies residues 313 to 332; the sequence is FARVLAFSNSCVNPFALYWL. At 333-392 the chain is on the cytoplasmic side; that stretch reads SRSFRQHFKKQVYCCKTEPPASQQSPTHSSTITGITAVKGNIQMSEISITLLSAYDVKKE. Cys-346 carries S-palmitoyl cysteine lipidation.

Belongs to the G-protein coupled receptor 1 family. Expressed only in brain, primarily in cortex and forebrain and at low levels in the midbrain.

Its subcellular location is the cell membrane. Functionally, the relative rank potency of bombesin-like peptides for this receptor is [Phe13]bombesin &gt; [Leu13]bombesin &gt; GRP &gt; neuromedin-B. The sequence is that of [Phe13]-bombesin receptor (BB4) from Bombina orientalis (Oriental fire-bellied toad).